Reading from the N-terminus, the 319-residue chain is Class I histocompatibility antigen, Non-RT1.A alpha-1 chain (319 aa).

The N-terminal stretch at 1 to 24 (MGAMAPRTLLLLLAAVLAPTQTWA) is a signal peptide. The tract at residues 25 to 114 (GSHSLRYFHT…LLSYYNQSEG (90 aa)) is alpha-1. The Extracellular portion of the chain corresponds to 25–307 (GSHSLRYFHT…WEPSPSTDSN (283 aa)). N-linked (GlcNAc...) asparagine glycosylation is present at Asn-110. An alpha-2 region spans residues 115–206 (GSHTIQRMYG…ERGKETLLRS (92 aa)). 2 disulfide bridges follow: Cys-125–Cys-188 and Cys-227–Cys-283. Residues 207–298 (DPPEAHVTLH…GLPEPLSQRW (92 aa)) form an alpha-3 region. In terms of domain architecture, Ig-like C1-type spans 209–295 (PEAHVTLHPR…EHEGLPEPLS (87 aa)). Residue Asn-280 is glycosylated (N-linked (GlcNAc...) asparagine). The segment at 299–307 (EPSPSTDSN) is connecting peptide. A helical membrane pass occupies residues 308 to 319 (LLLLFLELWQFL).

This sequence belongs to the MHC class I family. Heterodimer of an alpha chain and a beta chain (beta-2-microglobulin).

The protein localises to the membrane. In terms of biological role, involved in the presentation of foreign antigens to the immune system. The protein is Class I histocompatibility antigen, Non-RT1.A alpha-1 chain (RT1-Aw2) of Rattus norvegicus (Rat).